We begin with the raw amino-acid sequence, 67 residues long: Alpha-like toxin Lqh3 (67 aa).

The 65-residue stretch at 2 to 66 (RDGYIAQPEN…GIIVEGEKCH (65 aa)) folds into the LCN-type CS-alpha/beta domain. 4 disulfides stabilise this stretch: Cys-12–Cys-65, Cys-16–Cys-37, Cys-23–Cys-47, and Cys-27–Cys-49. Ser-67 carries the post-translational modification Serine amide.

This sequence belongs to the long (4 C-C) scorpion toxin superfamily. Sodium channel inhibitor family. Alpha subfamily. As to quaternary structure, monomer. In terms of tissue distribution, expressed by the venom gland.

The protein resides in the secreted. In terms of biological role, alpha toxins bind voltage-independently at site-3 of sodium channels (Nav) and inhibit the inactivation of the activated channels, thereby blocking neuronal transmission. The dissociation is voltage-dependent. This alpha-like toxin is highly toxic to insects and competes with LqhaIT on binding to insect sodium channels. Differs from classical anti-mammalian alpha-toxins as it inhibits sodium channel inactivation in cell bodies of hippocampus brain neurons, on which the anti-mammalian Lqh2 is inactive, and is unable to affect Nav1.2 in the rat brain, on which Lqh2 is highly active. Moreover, its pharmacological properties are unique in that its binding affinity for insect channels drops &gt;30-fold at pH 8.5 versus pH 6.5, and its rate of association with receptor site-3 on both insect and mammalian sodium channels is 4-15-fold slower compared with LqhaIT and Lqh2. The sequence is that of Alpha-like toxin Lqh3 from Leiurus hebraeus (Hebrew deathstalker scorpion).